The primary structure comprises 237 residues: NAD-dependent protein deacylase (237 aa).

Residues 1 to 235 form the Deacetylase sirtuin-type domain; that stretch reads MRIAVLSGAG…PGLLQRLPAL (235 aa). 8 to 28 contributes to the NAD(+) binding site; sequence GAGISAESGVPTFRDDKNGLW. The substrate site is built by Tyr-53 and Arg-56. NAD(+) is bound at residue 86–89; sequence QNVD. The active-site Proton acceptor is the His-104. Zn(2+)-binding residues include Cys-112, Cys-115, Cys-138, and Cys-140. Residues 177–179, 203–205, and Ala-221 each bind NAD(+); these read GTS and NPE.

This sequence belongs to the sirtuin family. Class III subfamily. Zn(2+) is required as a cofactor.

The protein resides in the cytoplasm. It catalyses the reaction N(6)-acetyl-L-lysyl-[protein] + NAD(+) + H2O = 2''-O-acetyl-ADP-D-ribose + nicotinamide + L-lysyl-[protein]. It carries out the reaction N(6)-succinyl-L-lysyl-[protein] + NAD(+) + H2O = 2''-O-succinyl-ADP-D-ribose + nicotinamide + L-lysyl-[protein]. Functionally, NAD-dependent lysine deacetylase and desuccinylase that specifically removes acetyl and succinyl groups on target proteins. Modulates the activities of several proteins which are inactive in their acylated form. The sequence is that of NAD-dependent protein deacylase from Mycolicibacterium paratuberculosis (strain ATCC BAA-968 / K-10) (Mycobacterium paratuberculosis).